The sequence spans 1151 residues: ATP-dependent helicase/deoxyribonuclease subunit B (1151 aa).

Residues 1–273 (MALRLVLGRA…LALAAGVRVE (273 aa)) form the UvrD-like helicase ATP-binding domain. 8–15 (GRAGSGKT) contributes to the ATP binding site. A UvrD-like helicase C-terminal domain is found at 282-578 (PPRFREAPAL…KLRLIPPALD (297 aa)). 4 residues coordinate [4Fe-4S] cluster: Cys-788, Cys-1107, Cys-1110, and Cys-1116.

It belongs to the helicase family. AddB/RexB type 1 subfamily. In terms of assembly, heterodimer of AddA and AddB. Requires Mg(2+) as cofactor. The cofactor is [4Fe-4S] cluster.

The heterodimer acts as both an ATP-dependent DNA helicase and an ATP-dependent, dual-direction single-stranded exonuclease. Recognizes the chi site generating a DNA molecule suitable for the initiation of homologous recombination. The AddB subunit has 5' -&gt; 3' nuclease activity but not helicase activity. The sequence is that of ATP-dependent helicase/deoxyribonuclease subunit B from Moorella thermoacetica (strain ATCC 39073 / JCM 9320).